We begin with the raw amino-acid sequence, 249 residues long: 1-(5-phosphoribosyl)-5-[(5-phosphoribosylamino)methylideneamino] imidazole-4-carboxamide isomerase (249 aa).

Residue D11 is the Proton acceptor of the active site. D132 serves as the catalytic Proton donor.

This sequence belongs to the HisA/HisF family.

Its subcellular location is the cytoplasm. It carries out the reaction 1-(5-phospho-beta-D-ribosyl)-5-[(5-phospho-beta-D-ribosylamino)methylideneamino]imidazole-4-carboxamide = 5-[(5-phospho-1-deoxy-D-ribulos-1-ylimino)methylamino]-1-(5-phospho-beta-D-ribosyl)imidazole-4-carboxamide. It participates in amino-acid biosynthesis; L-histidine biosynthesis; L-histidine from 5-phospho-alpha-D-ribose 1-diphosphate: step 4/9. This Nitrobacter winogradskyi (strain ATCC 25391 / DSM 10237 / CIP 104748 / NCIMB 11846 / Nb-255) protein is 1-(5-phosphoribosyl)-5-[(5-phosphoribosylamino)methylideneamino] imidazole-4-carboxamide isomerase.